Here is a 286-residue protein sequence, read N- to C-terminus: Release factor glutamine methyltransferase (286 aa).

S-adenosyl-L-methionine is bound by residues 120-124 (GTGSG), Asp143, Trp172, and Asn187. 187-190 (NPPY) contacts substrate.

It belongs to the protein N5-glutamine methyltransferase family. PrmC subfamily.

The enzyme catalyses L-glutaminyl-[peptide chain release factor] + S-adenosyl-L-methionine = N(5)-methyl-L-glutaminyl-[peptide chain release factor] + S-adenosyl-L-homocysteine + H(+). Methylates the class 1 translation termination release factors RF1/PrfA and RF2/PrfB on the glutamine residue of the universally conserved GGQ motif. The protein is Release factor glutamine methyltransferase of Gloeobacter violaceus (strain ATCC 29082 / PCC 7421).